Here is a 127-residue protein sequence, read N- to C-terminus: MLQLLLAVFIGGGTGSVARWLLSMRFNPLHQAIPLGTLAANLIGAFIIGMGFAWFSRMTNIDPVWKVLITTGFCGGLTTFSTFSAEVVFLLQEGRLGWALLNVFVNLLGSFAMTALAFWLFSASTAH.

The next 4 helical transmembrane spans lie at 4–24 (LLLA…LLSM), 35–55 (LGTL…FAWF), 71–91 (TGFC…VFLL), and 103–123 (VFVN…LFSA). Positions 75 and 78 each coordinate Na(+).

Belongs to the fluoride channel Fluc/FEX (TC 1.A.43) family.

Its subcellular location is the cell inner membrane. The catalysed reaction is fluoride(in) = fluoride(out). Na(+) is not transported, but it plays an essential structural role and its presence is essential for fluoride channel function. Fluoride-specific ion channel. Important for reducing fluoride concentration in the cell, thus reducing its toxicity. This is Fluoride-specific ion channel FluC from Escherichia coli O17:K52:H18 (strain UMN026 / ExPEC).